The primary structure comprises 398 residues: 1-deoxy-D-xylulose 5-phosphate reductoisomerase (398 aa).

The NADPH site is built by threonine 11, glycine 12, serine 13, isoleucine 14, and asparagine 125. Position 126 (lysine 126) interacts with 1-deoxy-D-xylulose 5-phosphate. An NADPH-binding site is contributed by glutamate 127. Aspartate 151 lines the Mn(2+) pocket. 1-deoxy-D-xylulose 5-phosphate contacts are provided by serine 152, glutamate 153, serine 186, and histidine 209. Glutamate 153 lines the Mn(2+) pocket. Residue glycine 215 participates in NADPH binding. 1-deoxy-D-xylulose 5-phosphate contacts are provided by serine 222, asparagine 227, lysine 228, and glutamate 231. Mn(2+) is bound at residue glutamate 231.

The protein belongs to the DXR family. Mg(2+) serves as cofactor. Requires Mn(2+) as cofactor.

It catalyses the reaction 2-C-methyl-D-erythritol 4-phosphate + NADP(+) = 1-deoxy-D-xylulose 5-phosphate + NADPH + H(+). The protein operates within isoprenoid biosynthesis; isopentenyl diphosphate biosynthesis via DXP pathway; isopentenyl diphosphate from 1-deoxy-D-xylulose 5-phosphate: step 1/6. Functionally, catalyzes the NADPH-dependent rearrangement and reduction of 1-deoxy-D-xylulose-5-phosphate (DXP) to 2-C-methyl-D-erythritol 4-phosphate (MEP). This chain is 1-deoxy-D-xylulose 5-phosphate reductoisomerase, found in Acinetobacter baylyi (strain ATCC 33305 / BD413 / ADP1).